The chain runs to 147 residues: MRTTYLAKPGEVERKWYIVDATDIPLGRLSTVVASILRGKNKPTFTPNVDTGDFVIVINAEKIKLTGRKATGKIYYHHTLHPGGIKSKTAGEMREKTPERLIETSIKGMLPHNTLGRKQALKLHVYAGSEHNQQAQNPEKLDITNLI.

This sequence belongs to the universal ribosomal protein uL13 family. Part of the 50S ribosomal subunit.

Its function is as follows. This protein is one of the early assembly proteins of the 50S ribosomal subunit, although it is not seen to bind rRNA by itself. It is important during the early stages of 50S assembly. The chain is Large ribosomal subunit protein uL13 from Pediococcus pentosaceus (strain ATCC 25745 / CCUG 21536 / LMG 10740 / 183-1w).